A 449-amino-acid chain; its full sequence is Serine/threonine-protein phosphatase 2A activator 2 (449 aa).

Disordered regions lie at residues 1 to 72 (MDSS…DPST) and 378 to 416 (MSEQ…PTGW). Residues 54–69 (NPTPVPETPALPPRPD) show a composition bias toward pro residues. Residues 389 to 403 (EENEEEGGEVEVYDD) are compositionally biased toward acidic residues.

Belongs to the PTPA-type PPIase family.

The protein localises to the cytoplasm. It catalyses the reaction [protein]-peptidylproline (omega=180) = [protein]-peptidylproline (omega=0). PPIases accelerate the folding of proteins. It catalyzes the cis-trans isomerization of proline imidic peptide bonds in oligopeptides. Acts as a regulatory subunit for PP2A-like phosphatases modulating their activity or substrate specificity, probably by inducing a conformational change in the catalytic subunit, a direct target of the PPIase. Can reactivate inactive phosphatase PP2A-phosphatase methylesterase complexes (PP2Ai) in presence of ATP and Mg(2+) by dissociating the inactive form from the complex. In Neurospora crassa (strain ATCC 24698 / 74-OR23-1A / CBS 708.71 / DSM 1257 / FGSC 987), this protein is Serine/threonine-protein phosphatase 2A activator 2 (rrd-2).